A 152-amino-acid chain; its full sequence is Transcriptional regulator MraZ (152 aa).

SpoVT-AbrB domains lie at 5–52 and 81–124; these read ATLV…PLPE and ASEC…DETT.

It belongs to the MraZ family. In terms of assembly, forms oligomers.

It is found in the cytoplasm. The protein localises to the nucleoid. Functionally, negatively regulates its own expression and that of the subsequent genes in the proximal part of the division and cell wall (dcw) gene cluster. Acts by binding directly to DNA. May also regulate the expression of genes outside the dcw cluster. The sequence is that of Transcriptional regulator MraZ from Shigella dysenteriae serotype 1 (strain Sd197).